The chain runs to 427 residues: Histidine--tRNA ligase (427 aa).

Belongs to the class-II aminoacyl-tRNA synthetase family. As to quaternary structure, homodimer.

The protein localises to the cytoplasm. The catalysed reaction is tRNA(His) + L-histidine + ATP = L-histidyl-tRNA(His) + AMP + diphosphate + H(+). The polypeptide is Histidine--tRNA ligase (Aster yellows witches'-broom phytoplasma (strain AYWB)).